Here is a 461-residue protein sequence, read N- to C-terminus: Chromosomal replication initiator protein DnaA (461 aa).

The domain I, interacts with DnaA modulators stretch occupies residues 1–90 (MAVSLWQQCI…RPSARPVAPA (90 aa)). Residues 91–124 (PVAAKPVNRQTKAQVGTTSFNTQAEPIINPNHRS) are domain II. Residues 125–341 (NINPTYQFDN…GALNRVIANA (217 aa)) are domain III, AAA+ region. Residues glycine 169, glycine 171, lysine 172, and threonine 173 each coordinate ATP. Positions 342–461 (NFTGRPITID…YANLIRTLSS (120 aa)) are domain IV, binds dsDNA.

Belongs to the DnaA family. Oligomerizes as a right-handed, spiral filament on DNA at oriC.

It is found in the cytoplasm. In terms of biological role, plays an essential role in the initiation and regulation of chromosomal replication. ATP-DnaA binds to the origin of replication (oriC) to initiate formation of the DNA replication initiation complex once per cell cycle. Binds the DnaA box (a 9 base pair repeat at the origin) and separates the double-stranded (ds)DNA. Forms a right-handed helical filament on oriC DNA; dsDNA binds to the exterior of the filament while single-stranded (ss)DNA is stabiized in the filament's interior. The ATP-DnaA-oriC complex binds and stabilizes one strand of the AT-rich DNA unwinding element (DUE), permitting loading of DNA polymerase. After initiation quickly degrades to an ADP-DnaA complex that is not apt for DNA replication. Binds acidic phospholipids. The protein is Chromosomal replication initiator protein DnaA of Shewanella frigidimarina (strain NCIMB 400).